We begin with the raw amino-acid sequence, 59 residues long: Large ribosomal subunit protein uL30 (59 aa).

This sequence belongs to the universal ribosomal protein uL30 family. As to quaternary structure, part of the 50S ribosomal subunit.

This is Large ribosomal subunit protein uL30 from Brachyspira hyodysenteriae (strain ATCC 49526 / WA1).